The chain runs to 131 residues: Large-conductance mechanosensitive channel (131 aa).

3 helical membrane-spanning segments follow: residues 8–28 (FAVRGNVIDLAVGVIIGGAFG), 30–50 (IVSSLVNDIIMPLVGLILGGI), and 67–87 (GAFLQTVVDFLVIAFSIFLFV).

The protein belongs to the MscL family. As to quaternary structure, homopentamer.

The protein localises to the cell membrane. Its function is as follows. Channel that opens in response to stretch forces in the membrane lipid bilayer. May participate in the regulation of osmotic pressure changes within the cell. The sequence is that of Large-conductance mechanosensitive channel from Anoxybacillus flavithermus (strain DSM 21510 / WK1).